The chain runs to 346 residues: Upstream stimulatory factor 2 (346 aa).

2 disordered regions span residues 1–44 and 215–244; these read MDML…PGAE and APRT…NEVE. A compositionally biased stretch (low complexity) spans 11–20; that stretch reads ASSATAAAAA. The span at 226 to 244 shows a compositional bias: basic and acidic residues; the sequence is DGTRTPRDERRRAQHNEVE. A bHLH domain is found at 235 to 290; the sequence is RRRAQHNEVERRRRDKINNWIVQLSKIIPDCHADNSKTGASKGGILSKACDYIREL. Residues 307-328 form a leucine-zipper region; that stretch reads LQMDNELLRQQIEELKNENALL.

As to quaternary structure, efficient DNA binding requires dimerization with another bHLH protein. Binds DNA as a homodimer or a heterodimer (USF1/USF2). Interacts with MAF.

It localises to the nucleus. In terms of biological role, transcription factor that binds to a symmetrical DNA sequence (E-boxes) (5'-CACGTG-3') that is found in a variety of viral and cellular promoters. In Mus musculus (Mouse), this protein is Upstream stimulatory factor 2 (Usf2).